Consider the following 274-residue polypeptide: Large ribosomal subunit protein uL2cz/uL2cy (274 aa).

2 disordered regions span residues 1 to 24 (MAIH…QVKS) and 223 to 274 (MNPV…RRSK). Over residues 7 to 24 (KTSTPSTRNGTVDSQVKS) the composition is skewed to polar residues.

It belongs to the universal ribosomal protein uL2 family. As to quaternary structure, part of the 50S ribosomal subunit.

It localises to the plastid. The protein localises to the chloroplast. In Nicotiana sylvestris (Wood tobacco), this protein is Large ribosomal subunit protein uL2cz/uL2cy (rpl2-A).